The chain runs to 229 residues: Uracil-DNA glycosylase (229 aa).

Residue Asp64 is the Proton acceptor of the active site.

The protein belongs to the uracil-DNA glycosylase (UDG) superfamily. UNG family.

It is found in the cytoplasm. The enzyme catalyses Hydrolyzes single-stranded DNA or mismatched double-stranded DNA and polynucleotides, releasing free uracil.. Its function is as follows. Excises uracil residues from the DNA which can arise as a result of misincorporation of dUMP residues by DNA polymerase or due to deamination of cytosine. The polypeptide is Uracil-DNA glycosylase (Geobacillus thermodenitrificans (strain NG80-2)).